The chain runs to 829 residues: Protein SEY1 homolog 2 (829 aa).

The interval 1–21 (MDEVSPTKHFTSKPLLPTKTP) is disordered. The Cytoplasmic portion of the chain corresponds to 1-728 (MDEVSPTKHF…EKENSEIKYQ (728 aa)). One can recognise a GB1/RHD3-type G domain in the interval 83-305 (GMDYNAVGIL…FLPQYNKEIP (223 aa)). 93 to 100 (GAQSSGKS) serves as a coordination point for GTP. 2 coiled-coil regions span residues 372–396 (KKIM…YMES) and 576–596 (DTIE…IKEL). A helical transmembrane segment spans residues 729–749 (IPLYLIVLVIFFGFDEFIAIL). The Lumenal portion of the chain corresponds to 750–752 (TNP). A helical transmembrane segment spans residues 753 to 773 (LLFILTLIIGGGIYIGYKLNL). Topologically, residues 774-829 (GGVAKNYIQYLLSMSLSSTMEYLRTIPFFTPLIDKIWPKDDNKDDDSTEETQEETK) are cytoplasmic.

The protein belongs to the TRAFAC class dynamin-like GTPase superfamily. GB1/RHD3 GTPase family. RHD3 subfamily.

It is found in the endoplasmic reticulum membrane. Functionally, probable GTP-binding protein that may be involved in cell development. The chain is Protein SEY1 homolog 2 from Entamoeba dispar (strain ATCC PRA-260 / SAW760).